Consider the following 457-residue polypeptide: Protein unc-93 homolog A (457 aa).

5 helical membrane passes run 8–28 (VLVL…LQSL), 42–62 (ALST…PVLI), 65–85 (LGCK…SLGN), 86–106 (FYAS…GAAA), and 140–160 (IFFL…SLVF). An N-linked (GlcNAc...) asparagine glycan is attached at asparagine 190. 6 consecutive transmembrane segments (helical) span residues 202 to 222 (TLLG…AVFL), 257 to 277 (LRLL…LSGD), 291 to 311 (FVGY…VLFG), 320 to 340 (TVLF…LLLW), 344 to 364 (PSQL…DAVW), and 395 to 415 (FVIA…YVLL). The segment at 438–457 (GPLAAGRTKPAEDGATQTKL) is disordered.

This sequence belongs to the unc-93 family.

It is found in the cell membrane. This is Protein unc-93 homolog A (UNC93A) from Bos taurus (Bovine).